Here is a 116-residue protein sequence, read N- to C-terminus: uncharacterized protein (116 aa).

A helical transmembrane segment spans residues 58–78 (IIVDFKFIFQIFLILSFGFFA).

The protein localises to the membrane. This is an uncharacterized protein from Rickettsia prowazekii (strain Madrid E).